A 111-amino-acid chain; its full sequence is Probable 4-amino-4-deoxy-L-arabinose-phosphoundecaprenol flippase subunit ArnE (111 aa).

3 helical membrane-spanning segments follow: residues 39-59 (WLAI…WVLQ), 61-81 (VPVG…TLAA), and 89-109 (VSLR…CMGV). In terms of domain architecture, EamA spans 40-109 (LAISLLLLGG…IVAGVMCMGV (70 aa)).

It belongs to the ArnE family. Heterodimer of ArnE and ArnF.

The protein localises to the cell inner membrane. The protein operates within bacterial outer membrane biogenesis; lipopolysaccharide biosynthesis. Functionally, translocates 4-amino-4-deoxy-L-arabinose-phosphoundecaprenol (alpha-L-Ara4N-phosphoundecaprenol) from the cytoplasmic to the periplasmic side of the inner membrane. The sequence is that of Probable 4-amino-4-deoxy-L-arabinose-phosphoundecaprenol flippase subunit ArnE from Sodalis glossinidius (strain morsitans).